Consider the following 189-residue polypeptide: Protein CURLY FLAG LEAF 1 (189 aa).

An EAR motif is present at residues T50–S55. The WW domain maps to L57–K91. A disordered region spans residues R90 to D148. Composition is skewed to acidic residues over residues S108–S121 and E135–D148.

Interacts with BHLH122/CFLAP1 and BHLH80/CFLAP2. Binds to HDG1. Mostly observed in roots, flowers and siliques. Expressed in cells differentiated from epidermal cells such as trichomes, stigmatic papillar cells and guard cells, as well as in tissues undergoing abscission and dehiscence.

In terms of biological role, negatively regulates the cuticle development by interacting with the HD-ZIP IV transcription factor HDG1. This chain is Protein CURLY FLAG LEAF 1, found in Arabidopsis thaliana (Mouse-ear cress).